Here is a 140-residue protein sequence, read N- to C-terminus: PDZ domain-containing protein 11 (140 aa).

A PDZ domain is found at 47-129; the sequence is TITLKKPPGA…ISMRVRFFPY (83 aa).

In terms of assembly, interacts with ATP2B1, ATP2B2, ATP2B3, ATP2B4 and ATP7A. Interacts with PLEKHA7 (via WW domains) at zonula adherens; this interaction is essential for the interaction between PLEKHA7 and the ADAM10-binding protein TSPAN33. Interacts with SLC5A6. As to expression, widely expressed (at protein level).

The protein localises to the secreted. The protein resides in the cytoplasm. Its subcellular location is the cell junction. It is found in the adherens junction. It localises to the cell membrane. In terms of biological role, mediates docking of ADAM10 to zonula adherens by interacting with PLEKHA7 which is required for PLEKHA7 to interact with the ADAM10-binding protein TSPAN33. The protein is PDZ domain-containing protein 11 (PDZD11) of Homo sapiens (Human).